The sequence spans 473 residues: Probable lipid II flippase MurJ (473 aa).

Transmembrane regions (helical) follow at residues 31–51 (TFGASSTLDAYYVSIVFPFFL), 90–110 (LVTLLIVFLSEVFPYFMASIF), 125–145 (LIRLTAPFITIVFVWAVFYSV), 153–173 (FLPALTPMFSNVGVIVGCLFG), 177–197 (WAAAGFTIGGLAALLVLLPFG), 215–235 (FFGTFMTMAVSQVTTLIDVNV), 253–273 (LYQLPLGIFGVAVSTVALSTL), 300–320 (IGLMALSERIISLLFGYGAFT), 327–347 (SAQILFMYAIGLCFVSLFNLL), 360–380 (PFFATLLVSAVNISLDVILGF), 382–402 (MGASGIALATSVSYIAGFVFL), 414–434 (IFKISLASAVMGTVILLLRGS), and 439–459 (LGTIFLVLIGVFVYVLFSKLL).

The protein belongs to the MurJ/MviN family.

Its subcellular location is the cell inner membrane. It participates in cell wall biogenesis; peptidoglycan biosynthesis. Its function is as follows. Involved in peptidoglycan biosynthesis. Transports lipid-linked peptidoglycan precursors from the inner to the outer leaflet of the cytoplasmic membrane. The polypeptide is Probable lipid II flippase MurJ (Thermotoga maritima (strain ATCC 43589 / DSM 3109 / JCM 10099 / NBRC 100826 / MSB8)).